The following is a 338-amino-acid chain: Phenylalanine--tRNA ligase alpha subunit (338 aa).

A Mg(2+)-binding site is contributed by Glu253.

This sequence belongs to the class-II aminoacyl-tRNA synthetase family. Phe-tRNA synthetase alpha subunit type 1 subfamily. Tetramer of two alpha and two beta subunits. It depends on Mg(2+) as a cofactor.

The protein localises to the cytoplasm. It carries out the reaction tRNA(Phe) + L-phenylalanine + ATP = L-phenylalanyl-tRNA(Phe) + AMP + diphosphate + H(+). The sequence is that of Phenylalanine--tRNA ligase alpha subunit from Geotalea uraniireducens (strain Rf4) (Geobacter uraniireducens).